Consider the following 362-residue polypeptide: Phosphoserine aminotransferase (362 aa).

Arginine 42 is an L-glutamate binding site. Pyridoxal 5'-phosphate is bound by residues 76–77 (AR), tryptophan 102, threonine 153, aspartate 174, and glutamine 197. Lysine 198 is modified (N6-(pyridoxal phosphate)lysine). Pyridoxal 5'-phosphate is bound at residue 239–240 (NT).

It belongs to the class-V pyridoxal-phosphate-dependent aminotransferase family. SerC subfamily. Homodimer. Pyridoxal 5'-phosphate is required as a cofactor.

The protein resides in the cytoplasm. The catalysed reaction is O-phospho-L-serine + 2-oxoglutarate = 3-phosphooxypyruvate + L-glutamate. It catalyses the reaction 4-(phosphooxy)-L-threonine + 2-oxoglutarate = (R)-3-hydroxy-2-oxo-4-phosphooxybutanoate + L-glutamate. It participates in amino-acid biosynthesis; L-serine biosynthesis; L-serine from 3-phospho-D-glycerate: step 2/3. Its pathway is cofactor biosynthesis; pyridoxine 5'-phosphate biosynthesis; pyridoxine 5'-phosphate from D-erythrose 4-phosphate: step 3/5. Its function is as follows. Catalyzes the reversible conversion of 3-phosphohydroxypyruvate to phosphoserine and of 3-hydroxy-2-oxo-4-phosphonooxybutanoate to phosphohydroxythreonine. The protein is Phosphoserine aminotransferase of Xenorhabdus nematophila (strain ATCC 19061 / DSM 3370 / CCUG 14189 / LMG 1036 / NCIMB 9965 / AN6).